A 1325-amino-acid chain; its full sequence is ATP-binding cassette sub-family C member 4 (1325 aa).

6 consecutive transmembrane segments (helical) span residues 93–113 (LILG…PLFL), 136–156 (GYAA…HLYF), 205–225 (FDQV…AIAV), 227–247 (VLLW…LVIL), 322–342 (ASFF…YVLL), and 351–371 (VFVA…FFPS). Residues 93-377 (LILGIFTLIE…FFPSAIERGS (285 aa)) form the ABC transmembrane type-1 1 domain. The region spanning 410 to 633 (VHVQDFTAFW…GVDFGSLLKK (224 aa)) is the ABC transporter 1 domain. 445–452 (GPVGAGKS) serves as a coordination point for ATP. A phosphothreonine mark is found at threonine 646 and threonine 648. Polar residues predominate over residues 657–667 (ASIWSQQSSRP). The interval 657 to 690 (ASIWSQQSSRPSLKDGAPEGQDAENTQAVQPEES) is disordered. Phosphoserine occurs at positions 664 and 668. A run of 5 helical transmembrane segments spans residues 710–730 (SWFF…FYVL), 761–781 (LSWY…FGIA), 849–869 (LVVS…IPLV), 954–974 (AICA…AKTL), and 977–997 (GQVG…QWSV). The ABC transmembrane type-1 2 domain maps to 714–1005 (IIFLVLLNMV…SVRQSAEVEN (292 aa)). In terms of domain architecture, ABC transporter 2 spans 1041-1274 (IVFDNVNFTY…PESLFYKMVQ (234 aa)). Residue 1075–1082 (GRTGAGKS) participates in ATP binding. The short motif at 1322-1325 (ETAL) is the PDZ-binding element.

As to quaternary structure, interacts (via PDZ-binding motif) with SNX27 (via PDZ domain); this interaction accelerates MRP4 internalization. Mg(2+) serves as cofactor. Post-translationally, N-glycosylated; leading to substrate-selective effects on its transport activity.

The protein localises to the basolateral cell membrane. It is found in the apical cell membrane. It catalyses the reaction ATP + H2O + xenobioticSide 1 = ADP + phosphate + xenobioticSide 2.. It carries out the reaction an S-substituted glutathione(in) + ATP + H2O = an S-substituted glutathione(out) + ADP + phosphate + H(+). The catalysed reaction is 17beta-estradiol 17-O-(beta-D-glucuronate)(in) + ATP + H2O = 17beta-estradiol 17-O-(beta-D-glucuronate)(out) + ADP + phosphate + H(+). The enzyme catalyses dehydroepiandrosterone 3-sulfate(in) + ATP + H2O = dehydroepiandrosterone 3-sulfate(out) + ADP + phosphate + H(+). It catalyses the reaction leukotriene C4(in) + ATP + H2O = leukotriene C4(out) + ADP + phosphate + H(+). It carries out the reaction leukotriene B4(in) + ATP + H2O = leukotriene B4(out) + ADP + phosphate + H(+). The catalysed reaction is urate(in) + ATP + H2O = urate(out) + ADP + phosphate + H(+). The enzyme catalyses 3',5'-cyclic GMP(in) + ATP + H2O = 3',5'-cyclic GMP(out) + ADP + phosphate + H(+). It catalyses the reaction 3',5'-cyclic AMP(in) + ATP + H2O = 3',5'-cyclic AMP(out) + ADP + phosphate + H(+). It carries out the reaction prostaglandin E2(in) + ATP + H2O = prostaglandin E2(out) + ADP + phosphate + H(+). The catalysed reaction is prostaglandin E1(in) + ATP + H2O = prostaglandin E1(out) + ADP + phosphate + H(+). The enzyme catalyses glycodeoxycholate(in) + glutathione(in) + ATP + H2O = glycodeoxycholate(out) + glutathione(out) + ADP + phosphate + H(+). It catalyses the reaction cholate(in) + glutathione(in) + ATP + H2O = cholate(out) + glutathione(out) + ADP + phosphate + H(+). It carries out the reaction glycocholate(in) + glutathione(in) + ATP + H2O = glycocholate(out) + glutathione(out) + ADP + phosphate + H(+). The catalysed reaction is taurocholate(in) + glutathione(in) + ATP + H2O = taurocholate(out) + glutathione(out) + ADP + phosphate + H(+). The enzyme catalyses glycochenodeoxycholate(in) + glutathione(in) + ATP + H2O = glycochenodeoxycholate(out) + glutathione(out) + ADP + phosphate + H(+). It catalyses the reaction taurochenodeoxycholate(in) + glutathione(in) + ATP + H2O = taurochenodeoxycholate(out) + glutathione(out) + ADP + phosphate + H(+). It carries out the reaction glycoursodeoxycholate(in) + glutathione(in) + ATP + H2O = glycoursodeoxycholate(out) + glutathione(out) + ADP + phosphate + H(+). The catalysed reaction is tauroursodeoxycholate(in) + glutathione(in) + ATP + H2O = tauroursodeoxycholate(out) + glutathione(out) + ADP + phosphate + H(+). Its function is as follows. ATP-dependent transporter of the ATP-binding cassette (ABC) family that actively extrudes physiological compounds and xenobiotics from cells. Transports a range of endogenous molecules that have a key role in cellular communication and signaling, including cyclic nucleotides such as cyclic AMP (cAMP) and cyclic GMP (cGMP), bile acids, steroid conjugates, urate, and prostaglandins. Also mediates the ATP-dependent efflux of glutathione conjugates such as leukotriene C4 (LTC4) and leukotriene B4 (LTB4). The presence of GSH is necessary for the ATP-dependent transport of LTB4, whereas GSH is not required for the transport of LTC4. Mediates the cotransport of bile acids with reduced glutathione (GSH). Transports a wide range of drugs and their metabolites, including anticancer, antiviral and antibiotics molecules. Confers resistance to anticancer agents. This chain is ATP-binding cassette sub-family C member 4, found in Mus musculus (Mouse).